Consider the following 498-residue polypeptide: Probable cytosol aminopeptidase (498 aa).

Residues Lys262 and Asp267 each coordinate Mn(2+). The active site involves Lys274. Asp285, Asp344, and Glu346 together coordinate Mn(2+). Arg348 is a catalytic residue.

It belongs to the peptidase M17 family. The cofactor is Mn(2+).

The protein resides in the cytoplasm. The enzyme catalyses Release of an N-terminal amino acid, Xaa-|-Yaa-, in which Xaa is preferably Leu, but may be other amino acids including Pro although not Arg or Lys, and Yaa may be Pro. Amino acid amides and methyl esters are also readily hydrolyzed, but rates on arylamides are exceedingly low.. It carries out the reaction Release of an N-terminal amino acid, preferentially leucine, but not glutamic or aspartic acids.. In terms of biological role, presumably involved in the processing and regular turnover of intracellular proteins. Catalyzes the removal of unsubstituted N-terminal amino acids from various peptides. The polypeptide is Probable cytosol aminopeptidase (Phytoplasma mali (strain AT)).